The sequence spans 344 residues: N-acetyl-gamma-glutamyl-phosphate reductase (344 aa).

The active site involves C150.

Belongs to the NAGSA dehydrogenase family. Type 1 subfamily.

Its subcellular location is the cytoplasm. The catalysed reaction is N-acetyl-L-glutamate 5-semialdehyde + phosphate + NADP(+) = N-acetyl-L-glutamyl 5-phosphate + NADPH + H(+). Its pathway is amino-acid biosynthesis; L-arginine biosynthesis; N(2)-acetyl-L-ornithine from L-glutamate: step 3/4. Catalyzes the NADPH-dependent reduction of N-acetyl-5-glutamyl phosphate to yield N-acetyl-L-glutamate 5-semialdehyde. This chain is N-acetyl-gamma-glutamyl-phosphate reductase, found in Pseudomonas putida (strain ATCC 700007 / DSM 6899 / JCM 31910 / BCRC 17059 / LMG 24140 / F1).